Reading from the N-terminus, the 302-residue chain is Beta-casein (302 aa).

The signal sequence occupies residues 1-15; the sequence is MKLLILTCLVALGFA. Residues S23 and S25 each carry the phosphoserine modification. 16 tandem repeats follow at residues 144–151, 152–159, 160–167, 168–175, 176–182, 183–190, 191–198, 199–204, 205–214, 215–222, 223–230, 231–238, 241–247, 248–255, 256–262, and 263–269. Residues 144–269 are 16 X approximate tandem repeats; it reads KREMLPIYER…LLPEEILPVN (126 aa).

Belongs to the beta-casein family. Mammary gland specific. Secreted in milk.

Its subcellular location is the secreted. Its function is as follows. Important role in determination of the surface properties of the casein micelles. This Notamacropus eugenii (Tammar wallaby) protein is Beta-casein (CSN2).